A 535-amino-acid polypeptide reads, in one-letter code: Pentatricopeptide repeat-containing protein At5g16420, mitochondrial (535 aa).

A mitochondrion-targeting transit peptide spans 1–28 (MFLSRVNPTRFPPFVASRRLFSASASAA). PPR repeat units lie at residues 82–112 (NYDT…LRNS), 119–153 (GENL…GVKR), 154–189 (SVRS…GITP), 190–224 (NIFT…GLVP), 225–259 (NLVT…GWYP), 260–294 (DATT…EIEP), 295–329 (NEVT…SFMP), 330–364 (DSSL…NCMP), 365–395 (DNAL…FEKG), 399–433 (SLLT…KCKP), 434–468 (NAFT…GCFP), and 469–503 (NKTT…GKVD).

Belongs to the PPR family. P subfamily.

It is found in the mitochondrion. This is Pentatricopeptide repeat-containing protein At5g16420, mitochondrial from Arabidopsis thaliana (Mouse-ear cress).